A 465-amino-acid chain; its full sequence is Glutamate--tRNA ligase (465 aa).

Positions 5–15 match the 'HIGH' region motif; that stretch reads PSPTGMFHVGG. Zn(2+)-binding residues include Cys96, Cys98, Cys118, and Asp120. The 'KMSKS' region signature appears at 228–232; it reads KLSKR. Lys231 provides a ligand contact to ATP.

It belongs to the class-I aminoacyl-tRNA synthetase family. Glutamate--tRNA ligase type 1 subfamily. In terms of assembly, monomer. The cofactor is Zn(2+).

It is found in the cytoplasm. The enzyme catalyses tRNA(Glu) + L-glutamate + ATP = L-glutamyl-tRNA(Glu) + AMP + diphosphate. In terms of biological role, catalyzes the attachment of glutamate to tRNA(Glu) in a two-step reaction: glutamate is first activated by ATP to form Glu-AMP and then transferred to the acceptor end of tRNA(Glu). This Salinispora tropica (strain ATCC BAA-916 / DSM 44818 / JCM 13857 / NBRC 105044 / CNB-440) protein is Glutamate--tRNA ligase.